A 264-amino-acid polypeptide reads, in one-letter code: Tritrans,polycis-undecaprenyl-diphosphate synthase (geranylgeranyl-diphosphate specific) (264 aa).

D43 is an active-site residue. D43 is a binding site for Mg(2+). Substrate is bound by residues 44 to 47, W48, H60, and 88 to 90; these read GNRR and STE. N91 serves as the catalytic Proton acceptor. Substrate-binding positions include F92, R94, R213, and 219–221; that span reads RIS. E232 provides a ligand contact to Mg(2+).

This sequence belongs to the UPP synthase family. In terms of assembly, homodimer. Requires Mg(2+) as cofactor.

It carries out the reaction geranylgeranyl diphosphate + 7 isopentenyl diphosphate = tri-trans,hepta-cis-undecaprenyl diphosphate + 7 diphosphate. Functionally, catalyzes the sequential condensation of isopentenyl diphosphate (IPP) with geranylgeranyl diphosphate (GGPP) to yield (2Z,6Z,10Z,14Z,18Z,22Z,26Z,30E,34E,38E)-undecaprenyl diphosphate (tritrans,heptacis-UPP). It is probably the precursor of glycosyl carrier lipids. The sequence is that of Tritrans,polycis-undecaprenyl-diphosphate synthase (geranylgeranyl-diphosphate specific) from Pyrococcus abyssi (strain GE5 / Orsay).